A 298-amino-acid polypeptide reads, in one-letter code: N-acetylmuramic acid 6-phosphate etherase (298 aa).

An SIS domain is found at 55-218; that stretch reads IHAQVSGGGR…STGLMIKSGK (164 aa). Residue glutamate 83 is the Proton donor of the active site. Residue glutamate 114 is part of the active site.

Belongs to the GCKR-like family. MurNAc-6-P etherase subfamily. As to quaternary structure, homodimer.

It catalyses the reaction N-acetyl-D-muramate 6-phosphate + H2O = N-acetyl-D-glucosamine 6-phosphate + (R)-lactate. It participates in amino-sugar metabolism; 1,6-anhydro-N-acetylmuramate degradation. The protein operates within amino-sugar metabolism; N-acetylmuramate degradation. It functions in the pathway cell wall biogenesis; peptidoglycan recycling. Specifically catalyzes the cleavage of the D-lactyl ether substituent of MurNAc 6-phosphate, producing GlcNAc 6-phosphate and D-lactate. Together with AnmK, is also required for the utilization of anhydro-N-acetylmuramic acid (anhMurNAc) either imported from the medium or derived from its own cell wall murein, and thus plays a role in cell wall recycling. This Shigella dysenteriae serotype 1 (strain Sd197) protein is N-acetylmuramic acid 6-phosphate etherase.